We begin with the raw amino-acid sequence, 120 residues long: uncharacterized protein (120 aa).

This is an uncharacterized protein from Saccharomyces cerevisiae (strain ATCC 204508 / S288c) (Baker's yeast).